Consider the following 412-residue polypeptide: MILTSVLGSGPRSWSSLWPLLGSSLSLRARSTSATDTHHVELARERSKTVTSFYNQSAIDVAAEKPSVRLTPTMMLYSGRSQDGSHLLKSGRYLQQELPVRIAHRIKGFRSLPFIIGCNPTILHVHELYIRAFQKLTDFPPIKDQADEAQYCQLVRQLLDDHKDVVTLLAEGLRESRKHIQDEKLVRYFLDKTLTSRLGIRMLATHHLALHEDKPDFVGIICTRLSPKKIIEKWVDFARRLCEHKYGNAPRVRINGHVAARFPFIPMPLDYILPELLKNAMRATMESHLDTPYNVPDVVITIANNDIDLIIRISDRGGGIAHKDLDRVMDYHFTTAEASTQDPRINPLFGHLDMHSGGQSGPMHGFGFGLPTSRAYAEYLGGSLQLQSLQGIGTDVYLRLRHIDGREESFRI.

The N-terminal 30 residues, 1–30 (MILTSVLGSGPRSWSSLWPLLGSSLSLRAR), are a transit peptide targeting the mitochondrion. S31 is subject to Phosphoserine. A Phosphoserine; by autocatalysis modification is found at S52. One can recognise a Histidine kinase domain in the interval 159-404 (LDDHKDVVTL…DVYLRLRHID (246 aa)). Residues K192 and K233 each carry the N6-acetyllysine modification. ATP is bound by residues N279 and D315. N279 is a binding site for Mg(2+). K(+)-binding residues include V328, D330, and F333. The ATP site is built by T334 and T335. 2 positions are modified to phosphoserine: S356 and S360. H364, G367, and L370 together coordinate ATP. G367 serves as a coordination point for K(+).

The protein belongs to the PDK/BCKDK protein kinase family. Homodimer. Homotetramer. Dimerizes through interaction of two opposing nucleotide-binding domains. Interacts with E2 component of the branched-chain alpha-ketoacid dehydrogenase (BCKDH) complex. Competes with BCKDK for binding to the E2 component; this interaction is modulated by branched-chain alpha-keto acids. At steady state, BCKDH holoenzyme contains BCKDK and BCKDHA is phosphorylated. In response to high levels of branched-chain alpha-keto acids, the inhibitory BCKDK is replaced by activating PPM1K leading to BCKDHA dephosphorylation and BCAA degradation. Post-translationally, autophosphorylated. As to expression, ubiquitous.

The protein localises to the mitochondrion matrix. It localises to the mitochondrion. It catalyses the reaction L-seryl-[3-methyl-2-oxobutanoate dehydrogenase] + ATP = O-phospho-L-seryl-[3-methyl-2-oxobutanoate dehydrogenase] + ADP + H(+). The enzyme catalyses L-seryl-[protein] + ATP = O-phospho-L-seryl-[protein] + ADP + H(+). Its function is as follows. Serine/threonine-protein kinase component of macronutrients metabolism. Forms a functional kinase and phosphatase pair with PPM1K, serving as a metabolic regulatory node that coordinates branched-chain amino acids (BCAAs) with glucose and lipid metabolism via two distinct phosphoprotein targets: mitochondrial BCKDHA subunit of the branched-chain alpha-ketoacid dehydrogenase (BCKDH) complex and cytosolic ACLY, a lipogenic enzyme of Krebs cycle. Phosphorylates and inactivates mitochondrial BCKDH complex a multisubunit complex consisting of three multimeric components each involved in different steps of BCAA catabolism: E1 composed of BCKDHA and BCKDHB, E2 core composed of DBT monomers, and E3 composed of DLD monomers. Associates with the E2 component of BCKDH complex and phosphorylates BCKDHA on Ser-334, leading to conformational changes that interrupt substrate channeling between E1 and E2 and inactivates the BCKDH complex. Phosphorylates ACLY on Ser-455 in response to changes in cellular carbohydrate abundance such as occurs during fasting to feeding metabolic transition. Refeeding stimulates MLXIPL/ChREBP transcription factor, leading to increased BCKDK to PPM1K expression ratio, phosphorylation and activation of ACLY that ultimately results in the generation of malonyl-CoA and oxaloacetate immediate substrates of de novo lipogenesis and glucogenesis, respectively. Recognizes phosphosites having SxxE/D canonical motif. In Mus musculus (Mouse), this protein is Branched-chain alpha-ketoacid dehydrogenase kinase (Bckdk).